Consider the following 161-residue polypeptide: Cuticle protein 16.8 (161 aa).

Gln1 carries the pyrrolidone carboxylic acid modification. Positions 1–10 (QSEPAGPPQP) are enriched in pro residues. Disordered stretches follow at residues 1–44 (QSEP…YSYT) and 67–103 (ETNE…PAKP). The region spanning 8 to 74 (PQPYTFSYDN…TVETNEPGTK (67 aa)) is the Chitin-binding type R&amp;R domain. The span at 67–86 (ETNEPGTKTSNPADAQIVSN) shows a compositional bias: polar residues. A compositionally biased stretch (low complexity) spans 87-103 (AATDSYSPSPASSPAKP).

Its function is as follows. Component of the cuticle of the tick. Binds chitin. The sequence is that of Cuticle protein 16.8 from Ixodes ricinus (Common tick).